A 115-amino-acid polypeptide reads, in one-letter code: Large ribosomal subunit protein bL19 (115 aa).

The protein belongs to the bacterial ribosomal protein bL19 family.

Functionally, this protein is located at the 30S-50S ribosomal subunit interface and may play a role in the structure and function of the aminoacyl-tRNA binding site. The polypeptide is Large ribosomal subunit protein bL19 (Desulforudis audaxviator (strain MP104C)).